Consider the following 422-residue polypeptide: Cytochrome P-450 monooxygenase DoxA (422 aa).

Residue C369 participates in heme binding.

The protein belongs to the cytochrome P450 family. Monomer. It depends on heme as a cofactor.

Its subcellular location is the cytoplasm. It carries out the reaction 13-deoxydaunorubicin + NADPH + O2 + H(+) = 13-dihydrodaunorubicin + NADP(+) + H2O. The catalysed reaction is 13-dihydrodaunorubicin + NADPH + O2 + H(+) = daunorubicin + NADP(+) + 2 H2O. It catalyses the reaction 13-deoxycarminomycin + NADPH + O2 + H(+) = 13-dihydrocarminomycin + NADP(+) + H2O. The enzyme catalyses 13-dihydrocarminomycin + NADPH + O2 + H(+) = carminomycin + NADP(+) + 2 H2O. It functions in the pathway antibiotic biosynthesis; daunorubicin biosynthesis. Its pathway is antibiotic biosynthesis; carminomycin biosynthesis. With respect to regulation, strongly inhibited by dithiothreitol and high ionic strength buffers. Its function is as follows. Involved in the biosynthesis of the anthracyclines carminomycin and daunorubicin (daunomycin) which are aromatic polyketide antibiotics that exhibit high cytotoxicity and are widely applied in the chemotherapy of a variety of cancers. In vivo, DoxA catalyzes the C-13 hydroxylation of 13-deoxycarminomycin and 13-deoxydaunorubicin to yield 13-dihydrocarminomycin and 13-dihydrodaunorubicin, respectively, as well as the oxidation of these 13-dihydro-anthracyclines to their respective 13-keto forms, carminomycin and daunorubicin. In vitro, it also catalyzes the C-14 hydroxylation of daunorubicin to form doxorubicin (adriamycin), although this strain is not a doxorubicin producer. It is not able to accept anthracyclinones (aglycones) and anthracyclines with a 10-carbomethoxyl moiety. 13-oxidation of the anthracyclines possessing the 4-methoxy substitution is greatly favored. The anthracycline analog desacetyladriamycin can be oxidized to 10-hydroxydesacetyladriamycin. It can only use NADP. DoxA acts jointly with DauV. This is Cytochrome P-450 monooxygenase DoxA (doxA) from Streptomyces sp. (strain C5).